The primary structure comprises 347 residues: NADH-quinone oxidoreductase subunit H 1 (347 aa).

Transmembrane regions (helical) follow at residues 13–33, 50–70, 82–102, 115–135, 161–181, 198–218, 263–283, 286–306, and 321–341; these read IIMIGQSLLLLVCLLVFIAYV, PNVVGPFGLFQSFADLLKFVF, AVFLLAPLVTVLLALSTWAVV, VGILYIFAISSLEVYGIIMGG, IGFVIVTVLLCVGSLNLTDIV, FLDWHWLSLFPMFIVFFISAL, CALTTILFLGGWLPPVDIWIL, VPGIIWFTLKACLVFFMFAMV, and LGWKVFLPLSLAMVIIVAFVL.

This sequence belongs to the complex I subunit 1 family. In terms of assembly, NDH-1 is composed of 14 different subunits. Subunits NuoA, H, J, K, L, M, N constitute the membrane sector of the complex.

The protein localises to the cell inner membrane. The enzyme catalyses a quinone + NADH + 5 H(+)(in) = a quinol + NAD(+) + 4 H(+)(out). Functionally, NDH-1 shuttles electrons from NADH, via FMN and iron-sulfur (Fe-S) centers, to quinones in the respiratory chain. The immediate electron acceptor for the enzyme in this species is believed to be ubiquinone. Couples the redox reaction to proton translocation (for every two electrons transferred, four hydrogen ions are translocated across the cytoplasmic membrane), and thus conserves the redox energy in a proton gradient. This subunit may bind ubiquinone. This chain is NADH-quinone oxidoreductase subunit H 1, found in Rhizobium etli (strain ATCC 51251 / DSM 11541 / JCM 21823 / NBRC 15573 / CFN 42).